A 406-amino-acid chain; its full sequence is MKFVDEVSIHVKAGDGGNGLMSFRREKFIEKGGPNGGDGGDGGSIYLEADVNLNTLVDYRYTRRFDAQRGENGGSKDCTGAKGDDLVLPVPVGTTVIDANTQEIIGDLTEPGQRLMVAQGGWHGLGNTRFKSSTNRAPRQTTPGKPGEARDLKLELKVLADVGLLGLPNAGKSTFIRAVSAAKPKVADYPFTTLVPNLGVVSVGRYKSFVVADIPGLIEGAAEGAGLGIRFLKHLARTRILLHLVDMAPLDESDPADAAEVIVRELGRFSPALTERERWLVLNKMDQILDPAERDARKQAVIERLGWEGPVYVISALERDGTEALSQDIMRYLDERTLRLEEDPQYAEELAELDQRIEDEARARLQALDDARALRRSGLKNAGAADDDDFDDEEDDGDGPEIFYVP.

Positions 1–159 constitute an Obg domain; sequence MKFVDEVSIH…RDLKLELKVL (159 aa). Residues 127–148 form a disordered region; sequence NTRFKSSTNRAPRQTTPGKPGE. Positions 129–143 are enriched in polar residues; sequence RFKSSTNRAPRQTTP. One can recognise an OBG-type G domain in the interval 160 to 334; that stretch reads ADVGLLGLPN…LSQDIMRYLD (175 aa). Residues 166–173, 191–195, 213–216, 283–286, and 315–317 each bind GTP; these read GLPNAGKS, FTTLV, DIPG, NKMD, and SAL. Mg(2+) is bound by residues S173 and T193. Residues 378–406 form a disordered region; the sequence is GLKNAGAADDDDFDDEEDDGDGPEIFYVP. Acidic residues predominate over residues 385-399; it reads ADDDDFDDEEDDGDG.

This sequence belongs to the TRAFAC class OBG-HflX-like GTPase superfamily. OBG GTPase family. In terms of assembly, monomer. The cofactor is Mg(2+).

Its subcellular location is the cytoplasm. In terms of biological role, an essential GTPase which binds GTP, GDP and possibly (p)ppGpp with moderate affinity, with high nucleotide exchange rates and a fairly low GTP hydrolysis rate. Plays a role in control of the cell cycle, stress response, ribosome biogenesis and in those bacteria that undergo differentiation, in morphogenesis control. This chain is GTPase Obg, found in Pseudomonas paraeruginosa (strain DSM 24068 / PA7) (Pseudomonas aeruginosa (strain PA7)).